The following is a 211-amino-acid chain: tRNA (guanine-N(7)-)-methyltransferase (211 aa).

S-adenosyl-L-methionine is bound by residues E44, D69, D96, and D118. The active site involves D118. Residue K122 participates in substrate binding. Residues 124 to 129 form an interaction with RNA region; that stretch reads RHEKRR. Substrate contacts are provided by residues D154 and 191–194; that span reads TEYE.

It belongs to the class I-like SAM-binding methyltransferase superfamily. TrmB family.

It catalyses the reaction guanosine(46) in tRNA + S-adenosyl-L-methionine = N(7)-methylguanosine(46) in tRNA + S-adenosyl-L-homocysteine. Its pathway is tRNA modification; N(7)-methylguanine-tRNA biosynthesis. In terms of biological role, catalyzes the formation of N(7)-methylguanine at position 46 (m7G46) in tRNA. The polypeptide is tRNA (guanine-N(7)-)-methyltransferase (Streptococcus equi subsp. zooepidemicus (strain MGCS10565)).